Here is a 335-residue protein sequence, read N- to C-terminus: Large ribosomal subunit protein uL3 (335 aa).

The tract at residues M1–A20 is disordered.

The protein belongs to the universal ribosomal protein uL3 family. In terms of assembly, part of the 50S ribosomal subunit. Forms a cluster with proteins L14 and L24e.

One of the primary rRNA binding proteins, it binds directly near the 3'-end of the 23S rRNA, where it nucleates assembly of the 50S subunit. In Methanothrix harundinacea (strain 6Ac) (Methanosaeta harundinacea), this protein is Large ribosomal subunit protein uL3 (rpl3).